A 436-amino-acid chain; its full sequence is Protein arginine methyltransferase NDUFAF7, mitochondrial (436 aa).

The transit peptide at 1–41 directs the protein to the mitochondrion; sequence MNALVRRCVARTGIPSIWRRKCFSSGNEPAESNHVTPMLRH. The disordered stretch occupies residues 413 to 436; the sequence is QGGKACQSEAPSTSVPGFDELVWH.

Belongs to the NDUFAF7 family. As to quaternary structure, interacts with NDUFS2.

It localises to the mitochondrion. It catalyses the reaction L-arginyl-[protein] + 2 S-adenosyl-L-methionine = N(omega),N(omega)'-dimethyl-L-arginyl-[protein] + 2 S-adenosyl-L-homocysteine + 2 H(+). Functionally, arginine methyltransferase involved in the assembly or stability of mitochondrial NADH:ubiquinone oxidoreductase complex (complex I). Acts by mediating symmetric dimethylation of 'Arg-118' of NDUFS2 after it assembles into the complex I, stabilizing the early intermediate complex. The sequence is that of Protein arginine methyltransferase NDUFAF7, mitochondrial from Rattus norvegicus (Rat).